Reading from the N-terminus, the 291-residue chain is Lactoylglutathione lyase (291 aa).

2 consecutive VOC domains span residues 24–149 (RLLH…LIQR) and 155–283 (PLCQ…LVDN). The substrate site is built by R31, N82, and H96. The active site involves H96. E145 acts as the Proton donor/acceptor in catalysis. A Ni(2+)-binding site is contributed by E145. Active-site residues include Q158 and E209. E209 lines the Ni(2+) pocket.

It belongs to the glyoxalase I family. As to quaternary structure, monomer. Ni(2+) is required as a cofactor. Phosphorylated after gibberellin treatment. In terms of tissue distribution, expressed in callus, stem, leaves, panicles and maturing seeds (at protein level).

It catalyses the reaction (R)-S-lactoylglutathione = methylglyoxal + glutathione. Its pathway is secondary metabolite metabolism; methylglyoxal degradation; (R)-lactate from methylglyoxal: step 1/2. Its function is as follows. Catalyzes the conversion of hemimercaptal, formed from methylglyoxal and glutathione, to S-lactoylglutathione. Involved in the detoxifiation of methylglyoxal. Can functionally complement growth defect of a yeast mutant lacking GLY I. Involved in abiotic stress response. Over-expression of GLYI-11 in tobacco increases tolerance to osmotic, oxidative and salt stresses. The sequence is that of Lactoylglutathione lyase from Oryza sativa subsp. japonica (Rice).